Here is a 149-residue protein sequence, read N- to C-terminus: Nucleoside diphosphate kinase 1 (149 aa).

Positions 9, 57, 85, 91, 102, and 112 each coordinate ATP. Residue H115 is the Pros-phosphohistidine intermediate of the active site.

It belongs to the NDK family. In terms of assembly, homohexamer. Can also form dodecamers. Mg(2+) is required as a cofactor.

The protein resides in the nucleus. It carries out the reaction a 2'-deoxyribonucleoside 5'-diphosphate + ATP = a 2'-deoxyribonucleoside 5'-triphosphate + ADP. It catalyses the reaction a ribonucleoside 5'-diphosphate + ATP = a ribonucleoside 5'-triphosphate + ADP. Its function is as follows. Major role in the synthesis of nucleoside triphosphates other than ATP. The ATP gamma phosphate is transferred to the NDP beta phosphate via a ping-pong mechanism, using a phosphorylated active-site intermediate. Involved in transcription regulation. Has G-quadruplex (G4) DNA-binding activity, which is independent of its nucleotide-binding and kinase activity. Binds folded G4 with low nanomolar affinity and corresponding unfolded G-rich DNA more weakly. Stabilizes folded G4s regardless of whether they are prefolded or not. In Zea mays (Maize), this protein is Nucleoside diphosphate kinase 1.